The following is a 336-amino-acid chain: HTH-type transcriptional regulator CdhR (336 aa).

An HTH araC/xylS-type domain is found at 213–311 (VQVIGEMERH…AASPSQDRAV (99 aa)). 2 consecutive DNA-binding regions (H-T-H motif) follow at residues 230–251 (LELAERIQVTRRQLERLFRVHL) and 278–301 (VLQVSLACGFESPSYFSRSYRARF). The disordered stretch occupies residues 305–336 (PSQDRAVLPLKAPAATPPGAPAGHRTPRAERG).

Functionally, induces the transcription of the PA5384-PA5388 operon in response to carnitine. This operon is involved in the degradation of L-carnitine, and allows P.aeruginosa to grow on L-carnitine as the sole source of carbon and nitrogen. This is HTH-type transcriptional regulator CdhR (cdhR) from Pseudomonas aeruginosa (strain ATCC 15692 / DSM 22644 / CIP 104116 / JCM 14847 / LMG 12228 / 1C / PRS 101 / PAO1).